We begin with the raw amino-acid sequence, 267 residues long: HTH-type transcriptional activator CsvR (267 aa).

DNA-binding regions (H-T-H motif) lie at residues 183 to 204 (AIIADVFNVSEITIRKRLESED) and 230 to 253 (ISQISNMIGISSASYFIRIFNKHF).

Homodimer.

In terms of biological role, transcriptional activator of fimbrial genes in enterotoxigenic E.coli. This Escherichia coli protein is HTH-type transcriptional activator CsvR.